Here is a 1170-residue protein sequence, read N- to C-terminus: MKVEELIIDGFKSYATRTVITDWDPQFNAITGLNGSGKSNILDAICFVLGIASMSTVRASSLQDLIYKRGQAGVTKASVTIVFDNTDKSNSPIGFTNSPQISVTRQVVLGGTSKYLINGHRAPQQSVLQLFQSVQLNINNPNFLIMQGKITKVLNMKPSEILSLIEEAAGTKMFEDRREKAERTMSKKETKLQENRTLLTEEIEPKLEKLRNEKRMFLEFQSTQTDLEKTERIVVSYEYYNIKHKHTSIRETLENGETRMKMLNEFVKKTSEEIDSLNEDVEEIKLQKEKELHKEGTISKLENKENGLLNEISRLKTSLSIKVENLNDTTEKSKALESEIASSSAKLIEKKSAYANTEKDYKMVQEQLSKQRDLYKRKEELVSTLTTGISSTGAADGGYNAQLAKAKTELNEVSLAIKKSSMKMELLKKELLTIEPKLKEATKDNELNVKHVKQCQETCDKLRARLVEYGFDPSRIKDLKQREDKLKSHYYQTCKNSEYLKRRVTNLEFNYTKPYPNFEASFVHGVVGQLFQIDNDNIRYATALQTCAGGRLFNVVVQDSQTATQLLERGRLRKRVTIIPLDKIYTRPISSQVLDLAKKIAPGKVELAINLIRFDESITKAMEFIFGNSLICEDPETAKKITFHPKIRARSITLQGDVYDPEGTLSGGSRNTSESLLVDIQKYNQIQKQIETIQADLNHVTEELQTQYATSQKTKTIQSDLNLSLHKLDLAKRNLDANPSSQIIARNEEILRDIGECENEIKTKQMSLKKCQEEVSTIEKDMKEYDSDKGSKLNELKKELKLLAKELEEQESESERKYDLFQNLELETEQLSSELDSNKTLLHNHLKSIESLKLENSDLEGKIRGVEDDLVTVQTELNEEKKRLMDIDDELNELETLIKKKQDEKKSSELELQKLVHDLNKYKSNTNNMEKIIEDLRQKHEFLEDFDLVRNIVKQNEGIDLDTYRERSKQLNEKFQELRKKVNPNIMNMIENVEKKEAALKTMIKTIEKDKMKIQETISKLNEYKRETLVKTWEKVTLDFGNIFADLLPNSFAKLVPCEGKDVTQGLEVKVKLGNIWKESLIELSGGQRSLIALSLIMALLQFRPAPMYILDEVDAALDLSHTQNIGHLIKTRFKGSQFIVVSLKEGMFANANRVFRTRFQDGTSVVSIM.

Glycine 32–serine 39 contributes to the ATP binding site. Residues lysine 172–tyrosine 469 adopt a coiled-coil conformation. The SMC hinge domain maps to valine 523–isoleucine 641. A coiled-coil region spans residues valine 678–glutamate 1027.

Belongs to the SMC family. SMC2 subfamily. As to quaternary structure, forms a heterodimer with SMC4. Component of the condensin complex, which contains the SMC2 and SMC4 heterodimer, and three non SMC subunits that probably regulate the complex: BRN1, YCS4 and YCG1/YCS5.

The protein resides in the nucleus. It localises to the cytoplasm. Its subcellular location is the chromosome. Functionally, central component of the condensin complex, a complex required for conversion of interphase chromatin into mitotic-like condense chromosomes. The condensin complex probably introduces positive supercoils into relaxed DNA in the presence of type I topoisomerases and converts nicked DNA into positive knotted forms in the presence of type II topoisomerases. The protein is Structural maintenance of chromosomes protein 2 (SMC2) of Saccharomyces cerevisiae (strain ATCC 204508 / S288c) (Baker's yeast).